The primary structure comprises 176 residues: Disulfide bond formation protein B (176 aa).

Residues 1–11 (MLQLTTYRNLQ) are Cytoplasmic-facing. The chain crosses the membrane as a helical span at residues 12-28 (VFLVIMTAIGMSFALFF). Over 29-46 (LQRYMGFSPCPLCIFQRI) the chain is Periplasmic. Cysteine 38 and cysteine 41 are disulfide-bonded. Residues 47 to 63 (GLMIMGGFALIAALFHP) traverse the membrane as a helical segment. The Cytoplasmic portion of the chain corresponds to 64–70 (KSMVIRL). Residues 71-88 (LLWLGSLAGIGWAAIVAG) form a helical membrane-spanning segment. Topologically, residues 89 to 145 (RHVWLQHLPADQVPSCGPGLDYWLDTLPMQQVLKEVFAGSGECASIEWTFLGLSIPE) are periplasmic. Cysteine 104 and cysteine 131 are joined by a disulfide. Residues 146-164 (QSLILFSILILTHLLILWR) traverse the membrane as a helical segment. Residues 165–176 (IVRPSTPKPLAR) are Cytoplasmic-facing.

It belongs to the DsbB family.

It is found in the cell inner membrane. In terms of biological role, required for disulfide bond formation in some periplasmic proteins. Acts by oxidizing the DsbA protein. The chain is Disulfide bond formation protein B from Psychrobacter arcticus (strain DSM 17307 / VKM B-2377 / 273-4).